The primary structure comprises 489 residues: Male-specific lethal 1-like 1 (489 aa).

2 disordered regions span residues 126-164 (PMVS…VRKG) and 224-311 (VKKD…EDMQ). The stretch at 179–227 (LLLQLELIEQQQKHLHNKNKEIEDLKAEKEMLMARIERMEHRLQMVKKD) forms a coiled coil. The 120-residue stretch at 347 to 466 (TVEVPSWRES…LKQQDFDLPW (120 aa)) folds into the PEHE domain. The interaction with KAT8 HAT domain stretch occupies residues 371–389 (ECLDDSVFLKRHSKLELDE). A Bipartite nuclear localization signal motif is present at residues 380-394 (KRHSKLELDEKRRKR).

Belongs to the msl-1 family. In terms of assembly, component of a multisubunit histone acetyltransferase complex (MSL). Interacts (via PEHE domain) with KAT8 (via HAT domain) and MSL3 (via MRG domain); both interactions are direct.

Its subcellular location is the nucleus. It localises to the nucleoplasm. The protein localises to the nucleus speckle. Component of histone acetyltransferase complex. Within MSL complex, promotes ubiquitination of histone H2B. The sequence is that of Male-specific lethal 1-like 1 (msl1l1) from Danio rerio (Zebrafish).